The primary structure comprises 303 residues: Polyisoprenyl-teichoic acid--peptidoglycan teichoic acid transferase TagU (303 aa).

The Cytoplasmic portion of the chain corresponds to 1-4; that stretch reads MKKK. Residues 5–25 traverse the membrane as a helical; Signal-anchor for type II membrane protein segment; the sequence is ILFWVLGILGVLIIGGGIYAY. The Extracellular segment spans residues 26-303; sequence NVYSSVSNTL…KLRTHLEVTK (278 aa).

The protein belongs to the LytR/CpsA/Psr (LCP) family.

It localises to the cell membrane. It functions in the pathway cell wall biogenesis. In terms of biological role, may catalyze the final step in cell wall teichoic acid biosynthesis, the transfer of the anionic cell wall polymers (APs) from their lipid-linked precursor to the cell wall peptidoglycan (PG). The sequence is that of Polyisoprenyl-teichoic acid--peptidoglycan teichoic acid transferase TagU from Bacillus anthracis (strain A0248).